The chain runs to 129 residues: Cytochrome c oxidase subunit 13, mitochondrial (129 aa).

A mitochondrion-targeting transit peptide spans 1–9 (MFRQCAKRY). Residues 10 to 43 (ASSLPPNALKPAFGPPDKVAAQKFKESLMATEKH) lie on the Mitochondrial matrix side of the membrane. Residues 44–71 (AKDTSNMWVKISVWVALPAIALTAVNTY) form a helical membrane-spanning segment. The Mitochondrial intermembrane segment spans residues 72–129 (FVEKEHAEHREHLKHVPDSEWPRDYEFMNIRSKPFFWGDGDKTLFWNPVVNRHIEHDD).

This sequence belongs to the cytochrome c oxidase subunit 6A family. Component of the cytochrome c oxidase (complex IV, CIV), a multisubunit enzyme composed of 12 subunits. The complex is composed of a catalytic core of 3 subunits COX1, COX2 and COX3, encoded in the mitochondrial DNA, and 9 supernumerary subunits COX4, COX5A (or COX5B), COX6, COX7, COX8, COX9, COX12, COX13 and COX26, which are encoded in the nuclear genome. The complex exists as a monomer or a dimer and forms supercomplexes (SCs) in the inner mitochondrial membrane with a dimer of ubiquinol-cytochrome c oxidoreductase (cytochrome b-c1 complex, complex III, CIII), resulting in 2 different assemblies (supercomplexes III(2)IV and III(2)IV(2)). COX13 interacts with COX1 and COX3 on the intermembrane space (IMS) and COX4 on the matrix side.

Its subcellular location is the mitochondrion inner membrane. The protein operates within energy metabolism; oxidative phosphorylation. In terms of biological role, component of the cytochrome c oxidase, the last enzyme in the mitochondrial electron transport chain which drives oxidative phosphorylation. The respiratory chain contains 3 multisubunit complexes succinate dehydrogenase (complex II, CII), ubiquinol-cytochrome c oxidoreductase (cytochrome b-c1 complex, complex III, CIII) and cytochrome c oxidase (complex IV, CIV), that cooperate to transfer electrons derived from NADH and succinate to molecular oxygen, creating an electrochemical gradient over the inner membrane that drives transmembrane transport and the ATP synthase. Cytochrome c oxidase is the component of the respiratory chain that catalyzes the reduction of oxygen to water. Electrons originating from reduced cytochrome c in the intermembrane space (IMS) are transferred via the dinuclear copper A center (CU(A)) of COX2 and heme A of COX1 to the active site in COX1, a binuclear center (BNC) formed by heme A3 and copper B (CU(B)). The BNC reduces molecular oxygen to 2 water molecules using 4 electrons from cytochrome c in the IMS and 4 protons from the mitochondrial matrix. This is Cytochrome c oxidase subunit 13, mitochondrial (COX13) from Saccharomyces cerevisiae (strain ATCC 204508 / S288c) (Baker's yeast).